The primary structure comprises 885 residues: Translation initiation factor IF-2 (885 aa).

Disordered stretches follow at residues 55–150 (IPDK…ADVT) and 269–300 (NTIN…EAVT). The span at 65–146 (EPKAKKEPKK…AEAPKPKESL (82 aa)) shows a compositional bias: basic and acidic residues. Positions 281-290 (RRARKKHKKP) are enriched in basic residues. In terms of domain architecture, tr-type G spans 384 to 553 (PRAPVITIMG…LLQADLLELK (170 aa)). The tract at residues 393–400 (GHVDHGKT) is G1. Residue 393–400 (GHVDHGKT) coordinates GTP. The tract at residues 418 to 422 (GITQH) is G2. Residues 439 to 442 (DTPG) are G3. Residues 439-443 (DTPGH) and 493-496 (NKMD) contribute to the GTP site. Positions 493–496 (NKMD) are G4. The segment at 529–531 (SAK) is G5.

This sequence belongs to the TRAFAC class translation factor GTPase superfamily. Classic translation factor GTPase family. IF-2 subfamily.

The protein localises to the cytoplasm. Functionally, one of the essential components for the initiation of protein synthesis. Protects formylmethionyl-tRNA from spontaneous hydrolysis and promotes its binding to the 30S ribosomal subunits. Also involved in the hydrolysis of GTP during the formation of the 70S ribosomal complex. This chain is Translation initiation factor IF-2, found in Campylobacter concisus (strain 13826).